Here is an 883-residue protein sequence, read N- to C-terminus: Translation initiation factor IF-2 (883 aa).

2 disordered regions span residues 1–96 (MVDT…RSGM) and 132–259 (QRRA…RGRL). Low complexity predominate over residues 57-66 (PAEPAAAAPE). A compositionally biased stretch (pro residues) spans 72–87 (TPAPPAVSPRQQPRPS). Basic and acidic residues predominate over residues 132–188 (QRRAAQELVDKAEREAAEVRRKAEEERHRHEEETKRKAETEAKKRFGEAEPAKKPAD). Residues 191-217 (PASTSTTTTAPRAPVTTTTRPPAVAAE) are compositionally biased toward low complexity. Positions 380–551 (PRSPVVTVMG…ALQAELLDLK (172 aa)) constitute a tr-type G domain. A G1 region spans residues 389 to 396 (GHVDHGKT). 389–396 (GHVDHGKT) contacts GTP. The G2 stretch occupies residues 414–418 (GITQH). A G3 region spans residues 437–440 (DTPG). GTP-binding positions include 437 to 441 (DTPGH) and 491 to 494 (NKID). Residues 491–494 (NKID) form a G4 region. Positions 527-529 (SAK) are G5.

Belongs to the TRAFAC class translation factor GTPase superfamily. Classic translation factor GTPase family. IF-2 subfamily.

The protein localises to the cytoplasm. Functionally, one of the essential components for the initiation of protein synthesis. Protects formylmethionyl-tRNA from spontaneous hydrolysis and promotes its binding to the 30S ribosomal subunits. Also involved in the hydrolysis of GTP during the formation of the 70S ribosomal complex. The polypeptide is Translation initiation factor IF-2 (Rhodopseudomonas palustris (strain BisB5)).